Reading from the N-terminus, the 472-residue chain is Carboxypeptidase Q (472 aa).

Positions 1-20 (MKFLIFAFFGGVHLLSLCSG) are cleaved as a signal peptide. A propeptide spanning residues 21–44 (KAIYKNGISKRTFEEIKEEIASYG) is cleaved from the precursor. 2 N-linked (GlcNAc...) asparagine glycosylation sites follow: Asn61 and Asn179. 2 residues coordinate Zn(2+): His290 and Asp302. Catalysis depends on Glu336, which acts as the Nucleophile. Residue Glu337 participates in Zn(2+) binding. N-linked (GlcNAc...) asparagine glycans are attached at residues Asn353 and Asn356. Asp364 lines the Zn(2+) pocket. Asn396 carries an N-linked (GlcNAc...) asparagine glycan. His434 contributes to the Zn(2+) binding site.

It belongs to the peptidase M28 family. In terms of assembly, homodimer. The monomeric form is inactive while the homodimer is active. In terms of processing, N-glycosylated. The secreted form is modified by hybrid or complex type oligosaccharide chains.

The protein localises to the endoplasmic reticulum. The protein resides in the golgi apparatus. It localises to the lysosome. It is found in the secreted. Its function is as follows. Carboxypeptidase that may play an important role in the hydrolysis of circulating peptides. Catalyzes the hydrolysis of dipeptides with unsubstituted terminals into amino acids. May play a role in the liberation of thyroxine hormone from its thyroglobulin (Tg) precursor. This is Carboxypeptidase Q (CPQ) from Pongo abelii (Sumatran orangutan).